A 478-amino-acid chain; its full sequence is Antiviral innate immune response effector IFIT1 (478 aa).

TPR repeat units lie at residues 52–85, 95–128, 141–174, 183–216, 218–249, and 251–284; these read VGIH…MQEE, LVTW…CKKL, IDCE…DPEN, ISAY…NPDN, YIKV…NMSS, and TYVF…TPTS. MRNA is bound at residue W147. An RNA-binding site is contributed by G190. Positions 259, 289, 290, and 336 each coordinate RNA. 4 TPR repeats span residues 305–339, 340–373, 378–412, and 437–470; these read ATKG…KPTF, EVAH…KPVV, QDIH…EQAS, and LESL…AADF.

Belongs to the IFIT family. In terms of assembly, component of an interferon-dependent multiprotein complex, at least composed of IFIT1, IFIT2 and IFIT3. Interacts (via TPR repeats 1-4) with RPL15. Interacts with STING1/MITA; could disrupt STING1 interaction with MAVS or TBK1, acting as a negative-feedback regulator of virus-triggered signaling. Interacts with EIF3E; this could be an alternative way to inhibit translation. In terms of processing, phosphorylated. Post-translationally, ISGylated.

Its subcellular location is the cytoplasm. Functionally, plays a key role in the innate immune response as part of an interferon-dependent multiprotein complex, recognizing and sequestering viral RNAs that lack host-specific 2'-O-methylation at their 5' cap. By distinguishing these RNAs from host mRNAs, inhibits their translation by competing with the translation initiation factor eIF4E. Could also prevent viral replication through its interaction with DNA replication origin-binding protein E1 of several viruses. Causes the translocation of E1 from the nucleus to the cytoplasm and can also inhibit its helicase activity in vitro. Exhibits antiviral activity against many viruses from the Flaviviridae (West Nile virus, Dengue virus, hepatitis C virus), Coronaviridae (human 229E coronavirus, SARS-CoV-2 and SARS-CoV), Poxviridae (vaccinia virus) and Togaviridae (Sindbis virus) families. The sequence is that of Antiviral innate immune response effector IFIT1 from Homo sapiens (Human).